The sequence spans 556 residues: Dihydroxy-acid dehydratase (556 aa).

Aspartate 78 is a binding site for Mg(2+). Residue cysteine 119 participates in [2Fe-2S] cluster binding. Positions 120 and 121 each coordinate Mg(2+). Position 121 is an N6-carboxylysine (lysine 121). Cysteine 191 is a [2Fe-2S] cluster binding site. Glutamate 442 contacts Mg(2+). Serine 468 functions as the Proton acceptor in the catalytic mechanism.

Belongs to the IlvD/Edd family. In terms of assembly, homodimer. [2Fe-2S] cluster is required as a cofactor. It depends on Mg(2+) as a cofactor.

The catalysed reaction is (2R)-2,3-dihydroxy-3-methylbutanoate = 3-methyl-2-oxobutanoate + H2O. It catalyses the reaction (2R,3R)-2,3-dihydroxy-3-methylpentanoate = (S)-3-methyl-2-oxopentanoate + H2O. It participates in amino-acid biosynthesis; L-isoleucine biosynthesis; L-isoleucine from 2-oxobutanoate: step 3/4. It functions in the pathway amino-acid biosynthesis; L-valine biosynthesis; L-valine from pyruvate: step 3/4. Functions in the biosynthesis of branched-chain amino acids. Catalyzes the dehydration of (2R,3R)-2,3-dihydroxy-3-methylpentanoate (2,3-dihydroxy-3-methylvalerate) into 2-oxo-3-methylpentanoate (2-oxo-3-methylvalerate) and of (2R)-2,3-dihydroxy-3-methylbutanoate (2,3-dihydroxyisovalerate) into 2-oxo-3-methylbutanoate (2-oxoisovalerate), the penultimate precursor to L-isoleucine and L-valine, respectively. This chain is Dihydroxy-acid dehydratase, found in Caldanaerobacter subterraneus subsp. tengcongensis (strain DSM 15242 / JCM 11007 / NBRC 100824 / MB4) (Thermoanaerobacter tengcongensis).